The sequence spans 142 residues: Succinate dehydrogenase subunit 6, mitochondrial (142 aa).

Component of complex II composed of eight subunits in plants: four classical SDH subunits SDH1, SDH2, SDH3 and SDH4 (a flavoprotein (FP), an iron-sulfur protein (IP), and a cytochrome b composed of a large and a small subunit.), as well as four subunits unknown in mitochondria from bacteria and heterotrophic eukaryotes.

The protein localises to the mitochondrion inner membrane. It functions in the pathway carbohydrate metabolism; tricarboxylic acid cycle. The polypeptide is Succinate dehydrogenase subunit 6, mitochondrial (Oryza sativa subsp. japonica (Rice)).